The chain runs to 185 residues: Ribosome-recycling factor (185 aa).

Residues 140–166 form a disordered region; sequence KRQEKDGDITEDEQRSLEKQVQKVTDD.

Belongs to the RRF family.

It is found in the cytoplasm. Functionally, responsible for the release of ribosomes from messenger RNA at the termination of protein biosynthesis. May increase the efficiency of translation by recycling ribosomes from one round of translation to another. This chain is Ribosome-recycling factor, found in Lactobacillus johnsonii (strain CNCM I-12250 / La1 / NCC 533).